Here is a 313-residue protein sequence, read N- to C-terminus: Putative S-adenosyl-L-methionine-dependent methyltransferase MAP_4064c (313 aa).

Residues D129 and 158–159 (DL) each bind S-adenosyl-L-methionine.

It belongs to the UPF0677 family.

In terms of biological role, exhibits S-adenosyl-L-methionine-dependent methyltransferase activity. The sequence is that of Putative S-adenosyl-L-methionine-dependent methyltransferase MAP_4064c from Mycolicibacterium paratuberculosis (strain ATCC BAA-968 / K-10) (Mycobacterium paratuberculosis).